We begin with the raw amino-acid sequence, 161 residues long: Cytochrome b6-f complex subunit 4 (161 aa).

The next 3 membrane-spanning stretches (helical) occupy residues 37-57 (LLYIFPVVIMGTIALVIGLAV), 96-116 (LLGVLMNASIPLGLMLIPFIE), and 130-150 (AMTVFLFGTLVTLWLGIGAAF).

The protein belongs to the cytochrome b family. PetD subfamily. In terms of assembly, the 4 large subunits of the cytochrome b6-f complex are cytochrome b6, subunit IV (17 kDa polypeptide, PetD), cytochrome f and the Rieske protein, while the 4 small subunits are PetG, PetL, PetM and PetN. The complex functions as a dimer.

It localises to the cellular thylakoid membrane. Its function is as follows. Component of the cytochrome b6-f complex, which mediates electron transfer between photosystem II (PSII) and photosystem I (PSI), cyclic electron flow around PSI, and state transitions. In Synechococcus elongatus, this protein is Cytochrome b6-f complex subunit 4.